The primary structure comprises 465 residues: Mothers against decapentaplegic homolog 5 (465 aa).

At T2 the chain carries N-acetylthreonine. The MH1 domain maps to 13–137 (PAVKRLLGWK…YKRVESPVLP (125 aa)). Positions 65, 110, 122, and 127 each coordinate Zn(2+). Positions 163-251 (NEPHMPQNAT…DTSSNMIPQT (89 aa)) are disordered. Residues 169–182 (QNATFPDSFHQPNN) are compositionally biased toward polar residues. A compositionally biased stretch (pro residues) spans 186 to 197 (PLSPNSPYPPSP). Positions 198–214 (ASSTYPNSPASSGPGSP) are enriched in low complexity. Residues 237-251 (NSQPMDTSSNMIPQT) show a composition bias toward polar residues. Residues 271–465 (WCSIVYYELN…SPLNPISSVS (195 aa)) form the MH2 domain. Phosphoserine occurs at positions 463 and 465.

The protein belongs to the dwarfin/SMAD family. As to quaternary structure, homodimer. Forms trimers with the co-SMAD SMAD4. Interacts with PEBP2-alpha subunit and SMURF1. Interacts with SUV39H1 and SUV39H2. Interacts (via MH2 domain) with LEMD3. Interacts with WWP1. Interacts with TMEM119. Interacts with ZNF8. Interacts with RANBP3L. Interacts with HK1. Interacts with HGS; this interaction attenuates BMP signaling. In terms of processing, phosphorylated on serine by BMP (bone morphogenetic proteins) type 1 receptor kinase. Post-translationally, ubiquitin-mediated proteolysis by SMAD-specific E3 ubiquitin ligase SMURF1. Predominantly expressed in mesenchyme and somites during embryogenesis, and present in many tissues of the adult.

It localises to the cytoplasm. The protein resides in the nucleus. The protein localises to the mitochondrion. Transcriptional regulator that plays a role in various cellular processes including embryonic development, cell differentiation, angiogenesis and tissue homeostasis. Upon BMP ligand binding to their receptors at the cell surface, is phosphorylated by activated type I BMP receptors (BMPRIs) and associates with SMAD4 to form a heteromeric complex which translocates into the nucleus acting as transcription factor. In turn, the hetero-trimeric complex recognizes cis-regulatory elements containing Smad Binding Elements (SBEs) to modulate the outcome of the signaling network. Non-phosphorylated SMAD5 has a cytoplasmic role in energy metabolism regulation by promoting mitochondrial respiration and glycolysis in response to cytoplasmic pH changes. Mechanistically, interacts with hexokinase 1/HK1 and thereby accelerates glycolysis. The chain is Mothers against decapentaplegic homolog 5 (Smad5) from Mus musculus (Mouse).